The chain runs to 53 residues: Antitoxin RelB3 (53 aa).

In terms of assembly, forms heterodimers with RelE and possibly a heterotetramer RelE3-RelB3(2)-RelE3 from 2 heterodimers. The heterotetramer is probably not very stable in solution.

Functionally, antitoxin component of a type II toxin-antitoxin (TA) system. Probably neutralizes the toxic activity of cognate toxin RelE. The protein is Antitoxin RelB3 (relB3) of Methanocaldococcus jannaschii (strain ATCC 43067 / DSM 2661 / JAL-1 / JCM 10045 / NBRC 100440) (Methanococcus jannaschii).